Reading from the N-terminus, the 169-residue chain is uncharacterized protein (169 aa).

2 helical membrane passes run N10–I30 and I149–P169.

The protein resides in the membrane. This is an uncharacterized protein from Dictyostelium discoideum (Social amoeba).